Consider the following 415-residue polypeptide: Carbamoyl phosphate synthase arginine-specific small chain (415 aa).

A mitochondrion-targeting transit peptide spans 1-17; sequence MLRFLKPFPLRFGKRFY. Positions 88, 272, and 274 each coordinate L-glutamine. Positions 225–412 constitute a Glutamine amidotransferase type-1 domain; it reads NIAVIDCGVK…IKEAIKYQKS (188 aa). The active-site Nucleophile is Cys301. The L-glutamine site is built by Met302, Gln305, Asn343, Gly345, and Tyr346. Catalysis depends on residues His385 and Glu387.

Belongs to the CarA family. In terms of assembly, heterodimer composed of 2 chains; the small (or glutamine) chain promotes the hydrolysis of glutamine to ammonia, which is used by the large (or ammonia) chain to synthesize carbamoyl phosphate.

Its subcellular location is the mitochondrion. It is found in the cytoplasm. The catalysed reaction is hydrogencarbonate + L-glutamine + 2 ATP + H2O = carbamoyl phosphate + L-glutamate + 2 ADP + phosphate + 2 H(+). It carries out the reaction L-glutamine + H2O = L-glutamate + NH4(+). It functions in the pathway amino-acid biosynthesis; L-arginine biosynthesis; carbamoyl phosphate from bicarbonate: step 1/1. Its function is as follows. Small subunit of the arginine-specific carbamoyl phosphate synthase (CPSase). CPSase catalyzes the formation of carbamoyl phosphate from the ammonia moiety of glutamine, carbonate, and phosphate donated by ATP, the first step of the arginine biosynthetic pathway. The small subunit (glutamine amidotransferase) binds and cleaves glutamine to supply the large subunit with the substrate ammonia. This Schizosaccharomyces pombe (strain 972 / ATCC 24843) (Fission yeast) protein is Carbamoyl phosphate synthase arginine-specific small chain (arg5).